Here is a 470-residue protein sequence, read N- to C-terminus: ADAM DEC1 (470 aa).

An N-terminal signal peptide occupies residues 1-30 (MLRGISQLPAVATMSWVLLPVLWLIVQTQA). A propeptide spanning residues 31-205 (IAIKQTPELT…QGPIRISRSL (175 aa)) is cleaved from the precursor. Asparagine 61 carries an N-linked (GlcNAc...) asparagine glycan. The tract at residues 173–200 (FTSNQEEQDPANHTCGVKSTDGKQGPIR) is disordered. Asparagine 184 carries an N-linked (GlcNAc...) (complex) asparagine glycan. A Peptidase M12B domain is found at 218–412 (KYIDLYLVLD…QKPKCLLQAP (195 aa)). Asparagine 237 carries an N-linked (GlcNAc...) asparagine glycan. Disulfide bonds link cysteine 328–cysteine 407 and cysteine 369–cysteine 374. Histidine 352 is a binding site for Zn(2+). Glutamate 353 is an active-site residue. Zn(2+) is bound by residues histidine 356 and aspartate 362. Residues 420 to 470 (TPVCGNHLLEVGEDCDCGSPKECTNLCCEALTCKLKPGTDCGGDAPNHTTE) enclose the Disintegrin domain. An N-linked (GlcNAc...) asparagine glycan is attached at asparagine 466.

It depends on Zn(2+) as a cofactor. In terms of tissue distribution, expressed highly in the small intestine and appendix, moderately in lymph node, mucosal lining of the colon, thymus, spleen and very weakly in the bone marrow. Predominantly expressed in dendritic cells (DC) of the germinal center. Weakly expressed in monocyte and highly expressed in macrophage. Absent in immature DC.

The protein resides in the secreted. Functionally, may play an important role in the control of the immune response and during pregnancy. This chain is ADAM DEC1 (ADAMDEC1), found in Homo sapiens (Human).